We begin with the raw amino-acid sequence, 393 residues long: NADH-quinone oxidoreductase subunit D (393 aa).

Belongs to the complex I 49 kDa subunit family. In terms of assembly, NDH-1 is composed of 14 different subunits. Subunits NuoB, C, D, E, F, and G constitute the peripheral sector of the complex.

The protein localises to the cell inner membrane. The enzyme catalyses a quinone + NADH + 5 H(+)(in) = a quinol + NAD(+) + 4 H(+)(out). Its function is as follows. NDH-1 shuttles electrons from NADH, via FMN and iron-sulfur (Fe-S) centers, to quinones in the respiratory chain. The immediate electron acceptor for the enzyme in this species is believed to be ubiquinone. Couples the redox reaction to proton translocation (for every two electrons transferred, four hydrogen ions are translocated across the cytoplasmic membrane), and thus conserves the redox energy in a proton gradient. The chain is NADH-quinone oxidoreductase subunit D from Ehrlichia canis (strain Jake).